We begin with the raw amino-acid sequence, 156 residues long: ATP synthase subunit b (156 aa).

The chain crosses the membrane as a helical span at residues 7-29; sequence LFAQMVVFLVLAWFTMKFVWPPL.

Belongs to the ATPase B chain family. As to quaternary structure, F-type ATPases have 2 components, F(1) - the catalytic core - and F(0) - the membrane proton channel. F(1) has five subunits: alpha(3), beta(3), gamma(1), delta(1), epsilon(1). F(0) has three main subunits: a(1), b(2) and c(10-14). The alpha and beta chains form an alternating ring which encloses part of the gamma chain. F(1) is attached to F(0) by a central stalk formed by the gamma and epsilon chains, while a peripheral stalk is formed by the delta and b chains.

Its subcellular location is the cell inner membrane. F(1)F(0) ATP synthase produces ATP from ADP in the presence of a proton or sodium gradient. F-type ATPases consist of two structural domains, F(1) containing the extramembraneous catalytic core and F(0) containing the membrane proton channel, linked together by a central stalk and a peripheral stalk. During catalysis, ATP synthesis in the catalytic domain of F(1) is coupled via a rotary mechanism of the central stalk subunits to proton translocation. Its function is as follows. Component of the F(0) channel, it forms part of the peripheral stalk, linking F(1) to F(0). The sequence is that of ATP synthase subunit b from Burkholderia pseudomallei (strain 668).